The following is a 277-amino-acid chain: Undecaprenyl-diphosphatase (277 aa).

7 consecutive transmembrane segments (helical) span residues 3–23, 48–68, 97–117, 125–145, 198–218, 227–247, and 257–277; these read YIIE…TEIF, LTLF…IYYF, ISYA…GLLI, LLSI…VFLL, SFLC…YDAI, IPGF…TIKI, and LIWF…LYII.

Belongs to the UppP family.

It is found in the cell membrane. The enzyme catalyses di-trans,octa-cis-undecaprenyl diphosphate + H2O = di-trans,octa-cis-undecaprenyl phosphate + phosphate + H(+). In terms of biological role, catalyzes the dephosphorylation of undecaprenyl diphosphate (UPP). Confers resistance to bacitracin. The chain is Undecaprenyl-diphosphatase from Acholeplasma laidlawii (strain PG-8A).